The sequence spans 200 residues: ATP-dependent Clp protease proteolytic subunit (200 aa).

Ser101 serves as the catalytic Nucleophile. His126 is a catalytic residue.

This sequence belongs to the peptidase S14 family. As to quaternary structure, component of the chloroplastic Clp protease core complex.

Its subcellular location is the plastid. The protein resides in the chloroplast stroma. It catalyses the reaction Hydrolysis of proteins to small peptides in the presence of ATP and magnesium. alpha-casein is the usual test substrate. In the absence of ATP, only oligopeptides shorter than five residues are hydrolyzed (such as succinyl-Leu-Tyr-|-NHMec, and Leu-Tyr-Leu-|-Tyr-Trp, in which cleavage of the -Tyr-|-Leu- and -Tyr-|-Trp bonds also occurs).. Functionally, cleaves peptides in various proteins in a process that requires ATP hydrolysis. Has a chymotrypsin-like activity. Plays a major role in the degradation of misfolded proteins. This Adiantum capillus-veneris (Maidenhair fern) protein is ATP-dependent Clp protease proteolytic subunit.